A 394-amino-acid polypeptide reads, in one-letter code: Putative 8-amino-7-oxononanoate synthase (394 aa).

Residue R21 coordinates substrate. Residue 107-108 coordinates pyridoxal 5'-phosphate; it reads GY. Position 132 (H132) interacts with substrate. Pyridoxal 5'-phosphate contacts are provided by residues S180, 205–208, and 236–239; these read DEAH and TLSK. K239 is modified (N6-(pyridoxal phosphate)lysine). Residue T361 coordinates substrate.

This sequence belongs to the class-II pyridoxal-phosphate-dependent aminotransferase family. BioF subfamily. In terms of assembly, homodimer. It depends on pyridoxal 5'-phosphate as a cofactor.

It catalyses the reaction 6-carboxyhexanoyl-[ACP] + L-alanine + H(+) = (8S)-8-amino-7-oxononanoate + holo-[ACP] + CO2. It participates in cofactor biosynthesis; biotin biosynthesis. Catalyzes the decarboxylative condensation of pimeloyl-[acyl-carrier protein] and L-alanine to produce 8-amino-7-oxononanoate (AON), [acyl-carrier protein], and carbon dioxide. The protein is Putative 8-amino-7-oxononanoate synthase (bioF) of Acaryochloris marina (strain MBIC 11017).